The primary structure comprises 109 residues: Nucleoid-associated protein Swoo_1794 (109 aa).

Positions 88 to 109 (QKDKMAEVTGGMQLPPGMKMPF) are disordered.

The protein belongs to the YbaB/EbfC family. As to quaternary structure, homodimer.

It is found in the cytoplasm. The protein resides in the nucleoid. Binds to DNA and alters its conformation. May be involved in regulation of gene expression, nucleoid organization and DNA protection. The sequence is that of Nucleoid-associated protein Swoo_1794 from Shewanella woodyi (strain ATCC 51908 / MS32).